We begin with the raw amino-acid sequence, 278 residues long: Putative cuticle collagen 91 (278 aa).

Disordered regions lie at residues 84–109 (LAKNCPPGPPGPPGAPGAAGEPGVDG) and 140–278 (GPAG…SVRQ). Residues 89–98 (PPGPPGPPGA) are compositionally biased toward pro residues. Triple-helical region stretches follow at residues 91-120 (GPPGPPGAPGAAGEPGVDGDAGAAGIDGVA), 137-199 (GEAG…NGQR), and 202-264 (GTPG…PGPD). The segment covering 99 to 109 (PGAAGEPGVDG) has biased composition (low complexity). The span at 158–167 (GADGQGGAPG) shows a compositional bias: gly residues. Composition is skewed to low complexity over residues 172–228 (EGPA…AGAP) and 236–245 (APGVDGQPGA).

The protein belongs to the cuticular collagen family. As to quaternary structure, collagen polypeptide chains are complexed within the cuticle by disulfide bonds and other types of covalent cross-links.

Functionally, nematode cuticles are composed largely of collagen-like proteins. The cuticle functions both as an exoskeleton and as a barrier to protect the worm from its environment. This Caenorhabditis elegans protein is Putative cuticle collagen 91 (col-91).